We begin with the raw amino-acid sequence, 127 residues long: Protein ApaG (127 aa).

Positions 3–127 (KTSIPDFQIT…FYLIAPLALH (125 aa)) constitute an ApaG domain.

This is Protein ApaG from Bdellovibrio bacteriovorus (strain ATCC 15356 / DSM 50701 / NCIMB 9529 / HD100).